Reading from the N-terminus, the 327-residue chain is DNA repair protein XRCC4 (327 aa).

The interaction with IFFO1 stretch occupies residues 1 to 211 (MERKVSRISL…QLEKNLKPER (211 aa)). A Phosphoserine modification is found at Ser-53. Coiled coils occupy residues 133 to 153 (IAEKQAKNEHLQKENDRLLRD) and 183 to 213 (LNEKKTKIRSLHKLLDEIQQLEKNLKPERET). Interaction with LIG4 stretches follow at residues 179–210 (FILVLNEKKTKIRSLHKLLDEIQQLEKNLKPE) and 179–211 (FILVLNEKKTKIRSLHKLLDEIQQLEKNLKPER). Ser-192 is subject to Phosphoserine. Residue Lys-208 forms a Glycyl lysine isopeptide (Lys-Gly) (interchain with G-Cter in SUMO) linkage. A Phosphotyrosine modification is found at Tyr-226. Residue Ser-229 is modified to Phosphoserine. Residue Thr-230 is modified to Phosphothreonine. Residues Ser-249 and Ser-253 each carry the phosphoserine modification. A disordered region spans residues 255–327 (DVTDIAPSRK…RNSSPEDIFD (73 aa)). A Nuclear localization signal motif is present at residues 263–268 (RKRRHH). Lys-289 participates in a covalent cross-link: Glycyl lysine isopeptide (Lys-Gly) (interchain with G-Cter in ubiquitin). A phosphoserine mark is found at Ser-294, Ser-295, Ser-308, and Ser-313. Residues 308–327 (SAGNMSLETLRNSSPEDIFD) show a composition bias toward polar residues. At Thr-316 the chain carries Phosphothreonine. Residues Ser-320 and Ser-321 each carry the phosphoserine modification.

It belongs to the XRCC4-XLF family. XRCC4 subfamily. Homodimer and homotetramer in solution. Interacts with NHEJ1/XLF; the interaction is direct and is mediated via a head-to-head interaction between N-terminal head regions. Interacts with LIG4; the LIG4-XRCC4 subcomplex has a 1:2 stoichiometry and XRCC4 is required for LIG4 stability. Component of the core long-range non-homologous end joining (NHEJ) complex (also named DNA-PK complex) composed of PRKDC, LIG4, XRCC4, XRCC6/Ku70, XRCC5/Ku86 and NHEJ1/XLF. Additional component of the NHEJ complex includes PAXX. Following autophosphorylation, PRKDC dissociates from DNA, leading to formation of the short-range NHEJ complex, composed of LIG4, XRCC4, XRCC6/Ku70, XRCC5/Ku86 and NHEJ1/XLF. Interacts with PRKDC; the interaction is direct. Interacts with XRCC6/Ku70; the interaction is direct. Interacts with APTX and APLF. Forms a heterotetramer with IFFO1; the interaction involves LIG4-free XRCC4 and leads to the relocalization of IFFO1 to the sites of DNA damage. Interacts with PNKP; mainly interacts with PNKP when phosphorylated at Thr-230, but is also able to interact at much lower level with PNKP when not unphosphorylated. Interacts with POLL (DNA polymerase lambda). In terms of assembly, interacts with XKR4; interacts with the processed form of XKR4, which is cleaved by caspase. Phosphorylated by PRKDC at the C-terminus in response to DNA damage; Ser-253 constitutes the main phosphorylation sites. Phosphorylations by PRKDC at the C-terminus of XRCC4 and NHEJ1/XLF are highly redundant and regulate ability of the XRCC4-NHEJ1/XLF subcomplex to bridge DNA. Phosphorylation by PRKDC does not prevent interaction with NHEJ1/XLF but disrupts ability to bridge DNA and promotes detachment from DNA. Phosphorylation at Ser-320 and Ser-321 by PRKDC promotes recognition by the SCF(FBXW7) complex and subsequent ubiquitination via 'Lys-63'-linked ubiquitin. Phosphorylation at Thr-230 by CK2 promotes interaction with PNKP; regulating PNKP activity and localization to DNA damage sites. Phosphorylation by CK2 promotes interaction with APTX. In terms of processing, ubiquitinated at Lys-289 by the SCF(FBXW7) complex via 'Lys-63'-linked ubiquitination, thereby promoting double-strand break repair: the SCF(FBXW7) complex specifically recognizes XRCC4 when phosphorylated at Ser-320 and Ser-321 by PRKDC, and 'Lys-63'-linked ubiquitination facilitates DNA non-homologous end joining (NHEJ) by enhancing association with XRCC5/Ku80 and XRCC6/Ku70. Monoubiquitinated. Post-translationally, undergoes proteolytic processing by caspase-3 (CASP3). This generates the protein XRCC4, C-terminus (XRCC4/C), which translocates to the cytoplasm and activates phospholipid scramblase activity of XKR4, thereby promoting phosphatidylserine exposure on apoptotic cell surface.

Its subcellular location is the nucleus. The protein localises to the chromosome. The protein resides in the cytoplasm. Functionally, DNA non-homologous end joining (NHEJ) core factor, required for double-strand break repair and V(D)J recombination. Acts as a scaffold protein that regulates recruitment of other proteins to DNA double-strand breaks (DSBs). Associates with NHEJ1/XLF to form alternating helical filaments that bridge DNA and act like a bandage, holding together the broken DNA until it is repaired. The XRCC4-NHEJ1/XLF subcomplex binds to the DNA fragments of a DSB in a highly diffusive manner and robustly bridges two independent DNA molecules, holding the broken DNA fragments in close proximity to one other. The mobility of the bridges ensures that the ends remain accessible for further processing by other repair factors. Plays a key role in the NHEJ ligation step of the broken DNA during DSB repair via direct interaction with DNA ligase IV (LIG4): the LIG4-XRCC4 subcomplex reseals the DNA breaks after the gap filling is completed. XRCC4 stabilizes LIG4, regulates its subcellular localization and enhances LIG4's joining activity. Binding of the LIG4-XRCC4 subcomplex to DNA ends is dependent on the assembly of the DNA-dependent protein kinase complex DNA-PK to these DNA ends. Promotes displacement of PNKP from processed strand break termini. In terms of biological role, acts as an activator of the phospholipid scramblase activity of XKR4. This form, which is generated upon caspase-3 (CASP3) cleavage, translocates into the cytoplasm and interacts with XKR4, thereby promoting phosphatidylserine scramblase activity of XKR4 and leading to phosphatidylserine exposure on apoptotic cell surface. This Cricetulus griseus (Chinese hamster) protein is DNA repair protein XRCC4.